The following is a 264-amino-acid chain: ATP synthase subunit a (264 aa).

Transmembrane regions (helical) follow at residues 39–59, 97–117, 139–159, 205–225, and 239–259; these read LDTL…FYIV, VAPL…MDLV, TADP…VIFY, LFGN…LPWW, and LLVI…YISL.

It belongs to the ATPase A chain family. In terms of assembly, F-type ATPases have 2 components, CF(1) - the catalytic core - and CF(0) - the membrane proton channel. CF(1) has five subunits: alpha(3), beta(3), gamma(1), delta(1), epsilon(1). CF(0) has three main subunits: a(1), b(2) and c(9-12). The alpha and beta chains form an alternating ring which encloses part of the gamma chain. CF(1) is attached to CF(0) by a central stalk formed by the gamma and epsilon chains, while a peripheral stalk is formed by the delta and b chains.

The protein localises to the cell inner membrane. In terms of biological role, key component of the proton channel; it plays a direct role in the translocation of protons across the membrane. This chain is ATP synthase subunit a, found in Coxiella burnetii (strain Dugway 5J108-111).